The primary structure comprises 64 residues: Small ribosomal subunit protein eS17 (64 aa).

Belongs to the eukaryotic ribosomal protein eS17 family.

The polypeptide is Small ribosomal subunit protein eS17 (Halorubrum lacusprofundi (strain ATCC 49239 / DSM 5036 / JCM 8891 / ACAM 34)).